Reading from the N-terminus, the 398-residue chain is 1-deoxy-D-xylulose 5-phosphate reductoisomerase (398 aa).

Residues Thr-10, Gly-11, Ser-12, Ile-13, Lys-37, Asn-38, and Asn-124 each contribute to the NADPH site. 1-deoxy-D-xylulose 5-phosphate is bound at residue Lys-125. Position 126 (Glu-126) interacts with NADPH. Position 150 (Asp-150) interacts with Mn(2+). 1-deoxy-D-xylulose 5-phosphate-binding residues include Ser-151, Glu-152, Ser-186, and His-209. Glu-152 contacts Mn(2+). Gly-215 contributes to the NADPH binding site. 1-deoxy-D-xylulose 5-phosphate-binding residues include Ser-222, Asn-227, Lys-228, and Glu-231. Residue Glu-231 participates in Mn(2+) binding.

The protein belongs to the DXR family. Homodimer. Requires Mg(2+) as cofactor. It depends on Mn(2+) as a cofactor.

The catalysed reaction is 2-C-methyl-D-erythritol 4-phosphate + NADP(+) = 1-deoxy-D-xylulose 5-phosphate + NADPH + H(+). It functions in the pathway isoprenoid biosynthesis; isopentenyl diphosphate biosynthesis via DXP pathway; isopentenyl diphosphate from 1-deoxy-D-xylulose 5-phosphate: step 1/6. Functionally, catalyzes the NADPH-dependent rearrangement and reduction of 1-deoxy-D-xylulose-5-phosphate (DXP) to 2-C-methyl-D-erythritol 4-phosphate (MEP). The chain is 1-deoxy-D-xylulose 5-phosphate reductoisomerase from Buchnera aphidicola subsp. Schizaphis graminum (strain Sg).